Consider the following 374-residue polypeptide: Queuine tRNA-ribosyltransferase (374 aa).

Residue D89 is the Proton acceptor of the active site. Substrate-binding positions include 89-93, D143, Q187, and G214; that span reads DSGGF. The RNA binding stretch occupies residues 245–251; sequence GVGKPED. D264 functions as the Nucleophile in the catalytic mechanism. Residues 269–273 form an RNA binding; important for wobble base 34 recognition region; the sequence is TRNAR. 4 residues coordinate Zn(2+): C302, C304, C307, and H333.

It belongs to the queuine tRNA-ribosyltransferase family. In terms of assembly, homodimer. Within each dimer, one monomer is responsible for RNA recognition and catalysis, while the other monomer binds to the replacement base PreQ1. Zn(2+) serves as cofactor.

The enzyme catalyses 7-aminomethyl-7-carbaguanine + guanosine(34) in tRNA = 7-aminomethyl-7-carbaguanosine(34) in tRNA + guanine. The protein operates within tRNA modification; tRNA-queuosine biosynthesis. In terms of biological role, catalyzes the base-exchange of a guanine (G) residue with the queuine precursor 7-aminomethyl-7-deazaguanine (PreQ1) at position 34 (anticodon wobble position) in tRNAs with GU(N) anticodons (tRNA-Asp, -Asn, -His and -Tyr). Catalysis occurs through a double-displacement mechanism. The nucleophile active site attacks the C1' of nucleotide 34 to detach the guanine base from the RNA, forming a covalent enzyme-RNA intermediate. The proton acceptor active site deprotonates the incoming PreQ1, allowing a nucleophilic attack on the C1' of the ribose to form the product. After dissociation, two additional enzymatic reactions on the tRNA convert PreQ1 to queuine (Q), resulting in the hypermodified nucleoside queuosine (7-(((4,5-cis-dihydroxy-2-cyclopenten-1-yl)amino)methyl)-7-deazaguanosine). The chain is Queuine tRNA-ribosyltransferase from Shewanella baltica (strain OS223).